We begin with the raw amino-acid sequence, 525 residues long: Glutamate--cysteine ligase (525 aa).

This sequence belongs to the glutamate--cysteine ligase type 1 family. Type 1 subfamily.

It carries out the reaction L-cysteine + L-glutamate + ATP = gamma-L-glutamyl-L-cysteine + ADP + phosphate + H(+). Its pathway is sulfur metabolism; glutathione biosynthesis; glutathione from L-cysteine and L-glutamate: step 1/2. This Vibrio vulnificus (strain YJ016) protein is Glutamate--cysteine ligase.